Reading from the N-terminus, the 910-residue chain is Seizure 6-like protein 2 (910 aa).

A signal peptide spans M1 to G27. Residues L28–N844 are Extracellular-facing. The segment at P70–E152 is disordered. Pro residues predominate over residues L123–R145. C173 and C202 are disulfide-bonded. One can recognise a CUB 1 domain in the interval C173–Y286. The N-linked (GlcNAc...) asparagine glycan is linked to N222. Residues L288 to A347 form the Sushi 1 domain. 12 disulfide bridges follow: C290–C330, C316–C345, C349–C376, C464–C508, C491–C523, C527–C553, C644–C686, C672–C699, C705–C747, C733–C764, C771–C813, and C799–C828. N332, N373, N473, and N517 each carry an N-linked (GlcNAc...) asparagine glycan. In terms of domain architecture, CUB 2 spans C349–F459. Residues D462 to A525 enclose the Sushi 2 domain. Residues C527–V638 enclose the CUB 3 domain. Sushi domains lie at D642–K701, M703–L766, and E769–V830. The helical transmembrane segment at L845–I865 threads the bilayer. The Cytoplasmic segment spans residues Y866–I910.

This sequence belongs to the SEZ6 family. Expressed exclusively in the brain, predominantly in the neurons. Wide expression in the gray matter of the brain with high levels in the olfactory bulb, anterior olfactory nuclei, hippocampal formation and cerebellar cortex. Detected diffusely and weakly in the white matter, such as the corpus callosum and cerebellar medulla. In the cerebellar cortex, intensely expressed in Purkinje cells (PC) and granule cells. Detected also in interneurons in the molecular layer. Up-regulated at two weeks after birth.

It is found in the cell membrane. The protein localises to the endoplasmic reticulum membrane. In terms of biological role, may contribute to specialized endoplasmic reticulum functions in neurons. This is Seizure 6-like protein 2 (Sez6l2) from Mus musculus (Mouse).